Reading from the N-terminus, the 432-residue chain is Histidine--tRNA ligase (432 aa).

This sequence belongs to the class-II aminoacyl-tRNA synthetase family.

It is found in the cytoplasm. The catalysed reaction is tRNA(His) + L-histidine + ATP = L-histidyl-tRNA(His) + AMP + diphosphate + H(+). The sequence is that of Histidine--tRNA ligase from Halobacterium salinarum (strain ATCC 29341 / DSM 671 / R1).